Consider the following 86-residue polypeptide: Mu-theraphotoxin-Cg2a 3 (86 aa).

The N-terminal stretch at 1–21 is a signal peptide; that stretch reads MKVSVVITLAVLGVMFVWASA. The propeptide occupies 22–50; that stretch reads AELKERGSDQRDSPAWIKSMERIFQSEER. 3 cysteine pairs are disulfide-bonded: Cys52-Cys66, Cys59-Cys71, and Cys65-Cys78. Residue Phe84 is modified to Phenylalanine amide.

The protein belongs to the neurotoxin 10 (Hwtx-1) family. 37 (Jztx-31) subfamily. As to expression, expressed by the venom gland.

It is found in the secreted. Functionally, inhibits both peak current and fast inactivation of voltage-gated sodium channels (Nav) channels. Inhibits the inactivation of Nav on DRG neurons (EC(50)=1.77 uM) and peak current of cardiac myocytes (IC(50)=0.90 uM). This chain is Mu-theraphotoxin-Cg2a 3, found in Chilobrachys guangxiensis (Chinese earth tiger tarantula).